Reading from the N-terminus, the 472-residue chain is Adenosylhomocysteinase (472 aa).

Residues Thr62, Asp137, and Glu197 each coordinate substrate. 198-200 contributes to the NAD(+) binding site; that stretch reads TTT. 2 residues coordinate substrate: Lys227 and Asp231. NAD(+)-binding positions include Asn232, 261–266, Glu284, Asn319, 340–342, and Asn385; these read GYGDVG and IGH.

The protein belongs to the adenosylhomocysteinase family. NAD(+) is required as a cofactor.

The protein localises to the cytoplasm. The enzyme catalyses S-adenosyl-L-homocysteine + H2O = L-homocysteine + adenosine. It participates in amino-acid biosynthesis; L-homocysteine biosynthesis; L-homocysteine from S-adenosyl-L-homocysteine: step 1/1. Its function is as follows. May play a key role in the regulation of the intracellular concentration of adenosylhomocysteine. This is Adenosylhomocysteinase from Bordetella petrii (strain ATCC BAA-461 / DSM 12804 / CCUG 43448).